Reading from the N-terminus, the 126-residue chain is Glycine cleavage system H protein (126 aa).

In terms of domain architecture, Lipoyl-binding spans 22–104 (VAIIGITEYA…YEKAWMVKVE (83 aa)). Position 63 is an N6-lipoyllysine (lysine 63).

Belongs to the GcvH family. As to quaternary structure, the glycine cleavage system is composed of four proteins: P, T, L and H. (R)-lipoate is required as a cofactor.

In terms of biological role, the glycine cleavage system catalyzes the degradation of glycine. The H protein shuttles the methylamine group of glycine from the P protein to the T protein. Functionally, is also involved in protein lipoylation via its role as an octanoyl/lipoyl carrier protein intermediate. In Staphylococcus aureus (strain USA300), this protein is Glycine cleavage system H protein.